The following is a 227-amino-acid chain: Deoxyribose-phosphate aldolase (227 aa).

The Proton donor/acceptor role is filled by Asp98. Residue Lys161 is the Schiff-base intermediate with acetaldehyde of the active site. Residue Lys191 is the Proton donor/acceptor of the active site.

It belongs to the DeoC/FbaB aldolase family. DeoC type 1 subfamily.

The protein localises to the cytoplasm. The enzyme catalyses 2-deoxy-D-ribose 5-phosphate = D-glyceraldehyde 3-phosphate + acetaldehyde. Its pathway is carbohydrate degradation; 2-deoxy-D-ribose 1-phosphate degradation; D-glyceraldehyde 3-phosphate and acetaldehyde from 2-deoxy-alpha-D-ribose 1-phosphate: step 2/2. In terms of biological role, catalyzes a reversible aldol reaction between acetaldehyde and D-glyceraldehyde 3-phosphate to generate 2-deoxy-D-ribose 5-phosphate. This is Deoxyribose-phosphate aldolase from Frankia alni (strain DSM 45986 / CECT 9034 / ACN14a).